The sequence spans 452 residues: Chromosomal replication initiator protein DnaA (452 aa).

The segment at 1 to 72 (MPDMLTLWTD…LVEYAYQAAH (72 aa)) is domain I, interacts with DnaA modulators. The domain II stretch occupies residues 72 to 114 (HEDIQPVLILENERQQQATLKAKTAPVAAGEPVEPTPTFMKET). The tract at residues 115–331 (ALNSRYTFDT…GALARVQAYS (217 aa)) is domain III, AAA+ region. ATP is bound by residues Gly-159, Gly-161, Lys-162, and Thr-163. Residues 332–452 (QLMHQPIATD…IDSLKDDLRR (121 aa)) are domain IV, binds dsDNA.

Belongs to the DnaA family. As to quaternary structure, oligomerizes as a right-handed, spiral filament on DNA at oriC.

The protein resides in the cytoplasm. Its function is as follows. Plays an essential role in the initiation and regulation of chromosomal replication. ATP-DnaA binds to the origin of replication (oriC) to initiate formation of the DNA replication initiation complex once per cell cycle. Binds the DnaA box (a 9 base pair repeat at the origin) and separates the double-stranded (ds)DNA. Forms a right-handed helical filament on oriC DNA; dsDNA binds to the exterior of the filament while single-stranded (ss)DNA is stabiized in the filament's interior. The ATP-DnaA-oriC complex binds and stabilizes one strand of the AT-rich DNA unwinding element (DUE), permitting loading of DNA polymerase. After initiation quickly degrades to an ADP-DnaA complex that is not apt for DNA replication. Binds acidic phospholipids. In Levilactobacillus brevis (strain ATCC 367 / BCRC 12310 / CIP 105137 / JCM 1170 / LMG 11437 / NCIMB 947 / NCTC 947) (Lactobacillus brevis), this protein is Chromosomal replication initiator protein DnaA.